A 519-amino-acid chain; its full sequence is Cytosol aminopeptidase (519 aa).

Position 42 is a phosphoserine (Ser-42). Residue Lys-45 is modified to N6-succinyllysine. Position 54 is a phosphoserine (Ser-54). Residues Lys-61 and Lys-103 each carry the N6-succinyllysine modification. A phosphoserine mark is found at Ser-180 and Ser-194. Positions 202, 203, and 205 each coordinate Zn(2+). Ser-238 carries the post-translational modification Phosphoserine. Residues Lys-282 and Asp-287 each coordinate Zn(2+). Residues Lys-282, Asp-287, Ser-292, and Lys-294 each coordinate substrate. Mg(2+) is bound at residue Asp-287. The active site involves Lys-294. Residues Arg-303, Asp-305, Asp-364, and Glu-366 each coordinate Zn(2+). The substrate site is built by Asp-305 and Asp-364. Mg(2+)-binding residues include Asp-364 and Glu-366. Residue Arg-368 is part of the active site. N6-acetyllysine; alternate is present on Lys-455. Lys-455 carries the N6-succinyllysine; alternate modification. Lys-476 carries the N6-succinyllysine modification. Lys-489 carries the N6-acetyllysine; alternate modification. Lys-489 carries the post-translational modification N6-succinyllysine; alternate.

Belongs to the peptidase M17 family. In terms of assembly, homohexamer. Zn(2+) serves as cofactor. The cofactor is Mn(2+).

It is found in the cytoplasm. The catalysed reaction is Release of an N-terminal amino acid, Xaa-|-Yaa-, in which Xaa is preferably Leu, but may be other amino acids including Pro although not Arg or Lys, and Yaa may be Pro. Amino acid amides and methyl esters are also readily hydrolyzed, but rates on arylamides are exceedingly low.. The enzyme catalyses an S-substituted L-cysteinylglycine + H2O = an S-substituted L-cysteine + glycine. It carries out the reaction L-cysteinylglycine + H2O = L-cysteine + glycine. It catalyses the reaction S-benzyl-L-cysteinylglycine + H2O = S-benzyl-L-cysteine + glycine. The catalysed reaction is Release of N-terminal proline from a peptide.. Its activity is regulated as follows. Zofenoprilat inhibits Cys-Gly hydrolysis activity. Cytosolic metallopeptidase that catalyzes the removal of unsubstituted N-terminal hydrophobic amino acids from various peptides. The presence of Zn(2+) ions is essential for the peptidase activity, and the association with other cofactors can modulate the substrate spectificity of the enzyme. For instance, in the presence of Mn(2+), it displays a specific Cys-Gly hydrolyzing activity of Cys-Gly-S-conjugates. Involved in the metabolism of glutathione and in the degradation of glutathione S-conjugates, which may play a role in the control of the cell redox status. This chain is Cytosol aminopeptidase, found in Bos taurus (Bovine).